The chain runs to 346 residues: Low specificity L-threonine aldolase (346 aa).

At K207 the chain carries N6-(pyridoxal phosphate)lysine.

Belongs to the threonine aldolase family. As to quaternary structure, homotetramer. Requires pyridoxal 5'-phosphate as cofactor.

The enzyme catalyses L-threonine = acetaldehyde + glycine. The catalysed reaction is L-allo-threonine = acetaldehyde + glycine. Functionally, catalyzes the cleavage of L-allo-threonine and L-threonine to glycine and acetaldehyde. In Pseudomonas aeruginosa (strain ATCC 15692 / DSM 22644 / CIP 104116 / JCM 14847 / LMG 12228 / 1C / PRS 101 / PAO1), this protein is Low specificity L-threonine aldolase (ltaE).